The primary structure comprises 439 residues: 26S rRNA (cytosine-C(5))-methyltransferase nsun-5 (439 aa).

Residues Asp266, Asp293, and Asp313 each contribute to the S-adenosyl-L-methionine site. Cys366 functions as the Nucleophile in the catalytic mechanism.

Belongs to the class I-like SAM-binding methyltransferase superfamily. RsmB/NOP family.

The enzyme catalyses a cytidine in 26S rRNA + S-adenosyl-L-methionine = a 5-methylcytidine in 26S rRNA + S-adenosyl-L-homocysteine + H(+). S-adenosyl-L-methionine-dependent methyltransferase which methylates the carbon-5 position of cytosine 2381 to 5-methylcytosine (m5C2381) in 26S rRNA. Plays a role in the production of mature 5S, 5.8S, 18S and 26S rRNAs and promotes the processing of the internally transcribed spacer 2 (ITS2), which separates the 5.8S and 26S rRNAs on large pre-rRNA precursors. May play a role in the translation of leucine and proline codons. May play a role in maintaining ribosomal frameshifting in response to osmotic stress. Not required for global translation. This is 26S rRNA (cytosine-C(5))-methyltransferase nsun-5 from Caenorhabditis elegans.